The sequence spans 147 residues: D-aminoacyl-tRNA deacylase (147 aa).

The short motif at Gly136–Pro137 is the Gly-cisPro motif, important for rejection of L-amino acids element.

The protein belongs to the DTD family. In terms of assembly, homodimer.

The protein localises to the cytoplasm. The catalysed reaction is glycyl-tRNA(Ala) + H2O = tRNA(Ala) + glycine + H(+). It catalyses the reaction a D-aminoacyl-tRNA + H2O = a tRNA + a D-alpha-amino acid + H(+). Functionally, an aminoacyl-tRNA editing enzyme that deacylates mischarged D-aminoacyl-tRNAs. Also deacylates mischarged glycyl-tRNA(Ala), protecting cells against glycine mischarging by AlaRS. Acts via tRNA-based rather than protein-based catalysis; rejects L-amino acids rather than detecting D-amino acids in the active site. By recycling D-aminoacyl-tRNA to D-amino acids and free tRNA molecules, this enzyme counteracts the toxicity associated with the formation of D-aminoacyl-tRNA entities in vivo and helps enforce protein L-homochirality. This Streptococcus pneumoniae (strain Taiwan19F-14) protein is D-aminoacyl-tRNA deacylase.